The chain runs to 444 residues: E1B 55 kDa protein (444 aa).

The disordered stretch occupies residues 1-27; sequence MEQDSDLESGRATNQRPPRVRVRGAGV. Phosphoserine is present on residues Ser438 and Ser439.

The protein belongs to the adenoviridae E1B 55 kDa protein family. In terms of assembly, interacts with host PML-4 and PML-5; this interaction promotes efficient subnuclear targeting of E1B-55K to PML nuclear bodies. Interacts with E4-ORF3 protein. Interacts with E4-ORF6 protein.

It is found in the host nucleus. The protein resides in the host cytoplasm. In terms of biological role, plays a major role to prevent cellular inhibition of viral genome replication. Assembles an SCF-like E3 ubiquitin ligase complex based on the cellular proteins ELOB, ELOC, CUL5 and RBX1, in cooperation with viral E4orf6. This viral RING-type ligase ubiquitinates cellular substrates and targets them to proteasomal degradation: TP53/p53, LIG4, MRE11-RAD50-NBS1 (MRN) complex, ITGA3, DAXX and BLM. E1B-55K probably acts as the substrate-specific adapter of the SCF-like E3 ubiquitin ligase complex. Degradation of host TP53/p53 activity is essential for preventing E1A-induced TP53 accumulation that would otherwise lead to cell apoptosis and growth arrest. E1B-55K also inactivates TP53 transcription-factor activity by binding its transactivation domain. E1B-55K also functions as a SUMO1 E3 ligase for TP53 which causes the latter to be sequestered in promyelocytic leukemia (PML) nuclear bodies thereby contributing to maximal inhibition of TP53 function. The polypeptide is E1B 55 kDa protein (Canis lupus familiaris (Dog)).